We begin with the raw amino-acid sequence, 355 residues long: UDP-N-acetylglucosamine--N-acetylmuramyl-(pentapeptide) pyrophosphoryl-undecaprenol N-acetylglucosamine transferase (355 aa).

UDP-N-acetyl-alpha-D-glucosamine-binding positions include 15 to 17, asparagine 127, arginine 163, serine 191, isoleucine 244, 263 to 268, and glutamine 288; these read TGG and ALTVSE.

This sequence belongs to the glycosyltransferase 28 family. MurG subfamily.

Its subcellular location is the cell inner membrane. The enzyme catalyses di-trans,octa-cis-undecaprenyl diphospho-N-acetyl-alpha-D-muramoyl-L-alanyl-D-glutamyl-meso-2,6-diaminopimeloyl-D-alanyl-D-alanine + UDP-N-acetyl-alpha-D-glucosamine = di-trans,octa-cis-undecaprenyl diphospho-[N-acetyl-alpha-D-glucosaminyl-(1-&gt;4)]-N-acetyl-alpha-D-muramoyl-L-alanyl-D-glutamyl-meso-2,6-diaminopimeloyl-D-alanyl-D-alanine + UDP + H(+). It participates in cell wall biogenesis; peptidoglycan biosynthesis. Cell wall formation. Catalyzes the transfer of a GlcNAc subunit on undecaprenyl-pyrophosphoryl-MurNAc-pentapeptide (lipid intermediate I) to form undecaprenyl-pyrophosphoryl-MurNAc-(pentapeptide)GlcNAc (lipid intermediate II). The protein is UDP-N-acetylglucosamine--N-acetylmuramyl-(pentapeptide) pyrophosphoryl-undecaprenol N-acetylglucosamine transferase of Cronobacter sakazakii (strain ATCC BAA-894) (Enterobacter sakazakii).